Reading from the N-terminus, the 633-residue chain is Molybdenum cofactor biosynthesis protein 1 (633 aa).

The molybdenum cofactor biosynthesis protein A stretch occupies residues 1–380 (MAAQPVSRVV…QMKNRPMILI (380 aa)). Serine 61 carries the phosphoserine modification. A Radical SAM core domain is found at 61–295 (SFGRHHSYLR…AKAFKIPGFR (235 aa)). Residue arginine 70 participates in GTP binding. Positions 77 and 81 each coordinate [4Fe-4S] cluster. Tyrosine 83 lines the S-adenosyl-L-methionine pocket. Cysteine 84 lines the [4Fe-4S] cluster pocket. Arginine 120 is a binding site for GTP. Glycine 124 contributes to the S-adenosyl-L-methionine binding site. Position 151 (threonine 151) interacts with GTP. Serine 175 contacts S-adenosyl-L-methionine. An N6-acetyllysine modification is found at lysine 195. Lysine 212 lines the GTP pocket. Residue methionine 246 coordinates S-adenosyl-L-methionine. Residues cysteine 309 and cysteine 312 each contribute to the [4Fe-4S] cluster site. Residue 314-316 (RLR) participates in GTP binding. Cysteine 326 contacts [4Fe-4S] cluster. The segment at 410–633 (VSFSSQMVTL…GGQRGDFHRT (224 aa)) is molybdenum cofactor biosynthesis protein C. The tract at residues 446–480 (SSHLDSDANPKCLSPTEPQAPAASSGPLPDSDQLT) is disordered. At lysine 525 the chain carries N6-acetyllysine. Catalysis depends on aspartate 603, which acts as the For molybdenum cofactor biosynthesis protein C activity.

This sequence in the C-terminal section; belongs to the MoaC family. In the N-terminal section; belongs to the radical SAM superfamily. MoaA family. As to quaternary structure, isoform MOCS1A and isoform MOCS1B probably form a heterooligomer. It depends on [4Fe-4S] cluster as a cofactor.

It catalyses the reaction GTP + AH2 + S-adenosyl-L-methionine = (8S)-3',8-cyclo-7,8-dihydroguanosine 5'-triphosphate + 5'-deoxyadenosine + L-methionine + A + H(+). The catalysed reaction is (8S)-3',8-cyclo-7,8-dihydroguanosine 5'-triphosphate = cyclic pyranopterin phosphate + diphosphate. Its pathway is cofactor biosynthesis; molybdopterin biosynthesis. Its function is as follows. Isoform MOCS1A and isoform MOCS1B probably form a complex that catalyzes the conversion of 5'-GTP to cyclic pyranopterin monophosphate (cPMP). MOCS1A catalyzes the cyclization of GTP to (8S)-3',8-cyclo-7,8-dihydroguanosine 5'-triphosphate and MOCS1B catalyzes the subsequent conversion of (8S)-3',8-cyclo-7,8-dihydroguanosine 5'-triphosphate to cPMP. In Bos taurus (Bovine), this protein is Molybdenum cofactor biosynthesis protein 1 (MOCS1).